A 139-amino-acid polypeptide reads, in one-letter code: Large ribosomal subunit protein uL16 (139 aa).

Over residues 1 to 17 the composition is skewed to basic residues; the sequence is MLMPKRVKYRKTQRGRM. Positions 1–24 are disordered; sequence MLMPKRVKYRKTQRGRMKGNSGRG.

Belongs to the universal ribosomal protein uL16 family. As to quaternary structure, part of the 50S ribosomal subunit.

Functionally, binds 23S rRNA and is also seen to make contacts with the A and possibly P site tRNAs. The protein is Large ribosomal subunit protein uL16 of Pelodictyon phaeoclathratiforme (strain DSM 5477 / BU-1).